The following is a 378-amino-acid chain: Cln5-like protein 1 (378 aa).

A signal peptide spans 1-20; sequence MNKIIIFILFLISILQSVRG. Residues Asn-63, Asn-93, Asn-135, Asn-181, Asn-220, Asn-226, Asn-254, and Asn-280 are each glycosylated (N-linked (GlcNAc...) asparagine). Residues 308 to 328 traverse the membrane as a helical segment; that stretch reads WIFIIILLSFTTVYLVGGILI.

It belongs to the CLN5 family.

It is found in the membrane. This Dictyostelium discoideum (Social amoeba) protein is Cln5-like protein 1 (cln5la).